Consider the following 152-residue polypeptide: Snaclec coagulation factor IX/factor X-binding protein subunit A (152 aa).

The N-terminal stretch at 1–23 is a signal peptide; sequence MGRFIFMSFGLLVVAASLRGTGA. Residues 24–152 form the C-type lectin domain; sequence DCLSGWSSYE…GQQNPFVCEA (129 aa). Disulfide bonds link C25–C36, C53–C150, and C125–C142. Residues S64, E66, and E70 each coordinate Ca(2+). E151 contributes to the Ca(2+) binding site.

The protein belongs to the snaclec family. Heterodimer of subunits A and B; disulfide-linked. In terms of tissue distribution, expressed by the venom gland.

It localises to the secreted. Its function is as follows. Anticoagulant protein which binds to the gamma-carboxyglutamic acid-domain regions of factors IX (F9) and factor X (F10) in the presence of calcium with a 1 to 1 stoichiometry. The chain is Snaclec coagulation factor IX/factor X-binding protein subunit A from Protobothrops flavoviridis (Habu).